Consider the following 186-residue polypeptide: uncharacterized protein (186 aa).

Residues 1–21 (MKFFLGSALFLILTFINLVRA) form the signal peptide. The Extracellular portion of the chain corresponds to 22 to 142 (EFEFITPAED…AFSVNPIDKK (121 aa)). 4 N-linked (GlcNAc...) asparagine glycosylation sites follow: Asn62, Asn75, Asn93, and Asn104. A helical transmembrane segment spans residues 143–163 (LAIGLSVGLSCCILIVLFLHF). Residues 164-186 (ATRRERRILKNEKELEMSSYRKH) lie on the Cytoplasmic side of the membrane.

The protein resides in the membrane. This is an uncharacterized protein from Schizosaccharomyces pombe (strain 972 / ATCC 24843) (Fission yeast).